Here is a 159-residue protein sequence, read N- to C-terminus: Cytochrome c-type biogenesis protein CcmE (159 aa).

Topologically, residues 1–8 (MNIRRKNR) are cytoplasmic. The chain crosses the membrane as a helical; Signal-anchor for type II membrane protein span at residues 9-29 (LWIACAVLAGLALTIGLVLYA). Residues 30 to 159 (LRSNIDLFYT…PASVYKDPAS (130 aa)) lie on the Periplasmic side of the membrane. Positions 130 and 134 each coordinate heme. Positions 134 to 147 (YTPPEVEKAMEANH) are enriched in basic and acidic residues. The interval 134–159 (YTPPEVEKAMEANHRRPASVYKDPAS) is disordered.

This sequence belongs to the CcmE/CycJ family.

The protein resides in the cell inner membrane. Heme chaperone required for the biogenesis of c-type cytochromes. Transiently binds heme delivered by CcmC and transfers the heme to apo-cytochromes in a process facilitated by CcmF and CcmH. This Escherichia coli (strain SMS-3-5 / SECEC) protein is Cytochrome c-type biogenesis protein CcmE.